The following is a 965-amino-acid chain: FKBP12-associated protein 1 (965 aa).

An RING-type; degenerate zinc finger spans residues 68–118; that stretch reads CMICTVEMDYTCQMFACKRCYRVFDYGCIREWALKSTEKTVDRIWKCPNCY. NF-X1-type zinc fingers lie at residues 159–177, 216–235, 362–382, 468–487, and 586–606; these read CMHGCSKICHLGPHPECTR, CSIHTCKKKCHPGLCGPCPE, CGKHSCPFTCHDKACMEPCLQ, CGIHKCQRKCHPGKCPPCLE, and CYHTCQKTCHLPGNCQKVCKQ. Residues 733 to 796 form the R3H domain; the sequence is ERWCSQIEAI…MRSVFIKKED (64 aa). T951 is subject to Phosphothreonine. Phosphoserine is present on S958.

This sequence belongs to the NFX1 family. In terms of assembly, interacts with FPR1.

The protein localises to the cytoplasm. It is found in the nucleus. In terms of biological role, may play a role in transcription regulation. The polypeptide is FKBP12-associated protein 1 (FAP1) (Saccharomyces cerevisiae (strain ATCC 204508 / S288c) (Baker's yeast)).